Reading from the N-terminus, the 129-residue chain is Thioredoxin H7 (129 aa).

A Thioredoxin domain is found at 6–129 (SSVHDVHSSM…LVKKIEQHRV (124 aa)). Active-site nucleophile residues include cysteine 55 and cysteine 58. Cysteine 55 and cysteine 58 are oxidised to a cystine.

Belongs to the thioredoxin family. Plant H-type subfamily.

Its subcellular location is the cytoplasm. Its function is as follows. Probable thiol-disulfide oxidoreductase that may be involved in the redox regulation of a number of cytosolic enzymes. This chain is Thioredoxin H7 (TRX7), found in Arabidopsis thaliana (Mouse-ear cress).